A 201-amino-acid polypeptide reads, in one-letter code: Large ribosomal subunit protein uL4 (201 aa).

The segment at 46 to 71 (QKTRAEVVGSGKKPWRQKGTGRARAG) is disordered.

Belongs to the universal ribosomal protein uL4 family. In terms of assembly, part of the 50S ribosomal subunit.

In terms of biological role, one of the primary rRNA binding proteins, this protein initially binds near the 5'-end of the 23S rRNA. It is important during the early stages of 50S assembly. It makes multiple contacts with different domains of the 23S rRNA in the assembled 50S subunit and ribosome. Functionally, forms part of the polypeptide exit tunnel. The sequence is that of Large ribosomal subunit protein uL4 from Shewanella piezotolerans (strain WP3 / JCM 13877).